Consider the following 263-residue polypeptide: Hydroxyethylthiazole kinase 2 (263 aa).

Residue M42 participates in substrate binding. ATP is bound by residues K118 and T164. A substrate-binding site is contributed by G191.

This sequence belongs to the Thz kinase family. It depends on Mg(2+) as a cofactor.

It catalyses the reaction 5-(2-hydroxyethyl)-4-methylthiazole + ATP = 4-methyl-5-(2-phosphooxyethyl)-thiazole + ADP + H(+). The protein operates within cofactor biosynthesis; thiamine diphosphate biosynthesis; 4-methyl-5-(2-phosphoethyl)-thiazole from 5-(2-hydroxyethyl)-4-methylthiazole: step 1/1. Its function is as follows. Catalyzes the phosphorylation of the hydroxyl group of 4-methyl-5-beta-hydroxyethylthiazole (THZ). The protein is Hydroxyethylthiazole kinase 2 of Clostridium botulinum (strain Loch Maree / Type A3).